The following is a 445-amino-acid chain: Adenylosuccinate synthetase (445 aa).

GTP is bound by residues 24–30 (GDEGKGK) and 52–54 (GHT). The active-site Proton acceptor is Asp25. Residues Asp25 and Gly52 each coordinate Mg(2+). IMP contacts are provided by residues 25 to 28 (DEGK), 50 to 53 (NAGH), Thr147, Arg161, Asn238, Thr253, and Arg317. The active-site Proton donor is the His53. 313 to 319 (TTTGRRR) serves as a coordination point for substrate. GTP contacts are provided by residues Arg319, 345–347 (KLD), and 427–429 (GVG).

Belongs to the adenylosuccinate synthetase family. Homodimer. The cofactor is Mg(2+).

It localises to the cytoplasm. It carries out the reaction IMP + L-aspartate + GTP = N(6)-(1,2-dicarboxyethyl)-AMP + GDP + phosphate + 2 H(+). It participates in purine metabolism; AMP biosynthesis via de novo pathway; AMP from IMP: step 1/2. Functionally, plays an important role in the de novo pathway and in the salvage pathway of purine nucleotide biosynthesis. Catalyzes the first committed step in the biosynthesis of AMP from IMP. This chain is Adenylosuccinate synthetase, found in Malassezia globosa (strain ATCC MYA-4612 / CBS 7966) (Dandruff-associated fungus).